Reading from the N-terminus, the 419-residue chain is uncharacterized protein (419 aa).

[4Fe-4S] cluster contacts are provided by C38, C44, C47, and C126. Residues Q250, Y280, E301, and D346 each contribute to the S-adenosyl-L-methionine site. C373 serves as the catalytic Nucleophile.

The protein belongs to the class I-like SAM-binding methyltransferase superfamily. RNA M5U methyltransferase family.

This is an uncharacterized protein from Prochlorococcus marinus (strain SARG / CCMP1375 / SS120).